A 451-amino-acid polypeptide reads, in one-letter code: UDP-N-acetylmuramoylalanine--D-glutamate ligase (451 aa).

ATP is bound at residue 119–125 (GSNGKTT).

The protein belongs to the MurCDEF family.

Its subcellular location is the cytoplasm. The enzyme catalyses UDP-N-acetyl-alpha-D-muramoyl-L-alanine + D-glutamate + ATP = UDP-N-acetyl-alpha-D-muramoyl-L-alanyl-D-glutamate + ADP + phosphate + H(+). It participates in cell wall biogenesis; peptidoglycan biosynthesis. Its function is as follows. Cell wall formation. Catalyzes the addition of glutamate to the nucleotide precursor UDP-N-acetylmuramoyl-L-alanine (UMA). The chain is UDP-N-acetylmuramoylalanine--D-glutamate ligase from Geobacillus sp. (strain WCH70).